Reading from the N-terminus, the 1057-residue chain is Structural maintenance of chromosomes protein 6B (1057 aa).

Positions 22 to 1047 constitute a Zinc-hook domain; sequence ILRIKVENFM…ISMVKSHERI (1026 aa). 49 to 56 lines the ATP pocket; the sequence is GQNGSGKS. The stretch at 135–448 forms a coiled coil; it reads KVSNKRDELR…NDLKKHQTNK (314 aa). The segment at 449–632 is flexible hinge; sequence VTAFGGDRVI…PPLSRRPSRL (184 aa). A coiled-coil region spans residues 633–904; it reads CASFDDQIKD…QDHREKLMAC (272 aa). Positions 818–828 are enriched in basic and acidic residues; it reads KNKRKESDQKA. A disordered region spans residues 818–845; it reads KNKRKESDQKASEICPESEIESLGPWDG.

Belongs to the SMC family. SMC6 subfamily. As to quaternary structure, forms a heterodimer with SMC5. The SMC5-SMC6 complex is composed of the SMC5 and SMC6 heterodimer attached via their hinge domain and from the non-SMC subunit NSE4A or NSE4B. In terms of tissue distribution, expressed in seedlings, rosette leaves and floral buds.

Its subcellular location is the nucleus. It localises to the chromosome. Functionally, core component of the SMC5-SMC6 complex that promotes sister chromatid alignment after DNA damage and facilitates double-stranded DNA breaks (DSBs) repair via homologous recombination between sister chromatids. This chain is Structural maintenance of chromosomes protein 6B (SMC6B), found in Arabidopsis thaliana (Mouse-ear cress).